Consider the following 381-residue polypeptide: MELQPQFNEFLANIRPTDTQKEDWKSGARTLRERLKNFEPLKEIVVSTFLQGSIRRSTAIRPLGDKRPDVDIVVVTNLDHTRMSPTDAMDLFIPFLEKYYPGKWETQGRSFGITLSYVELDLVITAIPESGAEKSHLEQLYKSESVLTVNSLEEQTDWRLNKSWTPNTGWLSESNSAQVEDAPASEWKAHPLVLPDREKNEWGRTHPLAQIRWTAEKNRLCNGHYINLVRAVKWWRQQNSEDLPKYPKGYPLEHLIGNALDNGTTSMAQGLVQLMDTFLSRWAAIYNQKSKPWLSDHGVAEHDVMARLTAEDFCSFYEGIASAAEIARNALASEEPQESAQLWRQLFGSKFPLPGPQGGDRNGGFTTPSKPAEPQKTGRFA.

6 residues coordinate ATP: Gln-51, Ser-53, Arg-56, Asp-69, Asp-71, and Arg-109. Catalysis depends on residues Asp-69 and Asp-71. 2 residues coordinate Mg(2+): Asp-69 and Asp-71. The active site involves Asp-121. Residues Asp-121 and Asp-196 each coordinate Mg(2+). ATP is bound by residues Asp-196, Arg-197, Arg-204, Thr-205, Gln-210, Lys-233, and Tyr-250. Asn-258 and Leu-260 together coordinate Mg(2+). Positions 304 and 307 each coordinate ATP. The disordered stretch occupies residues 348 to 381; the sequence is GSKFPLPGPQGGDRNGGFTTPSKPAEPQKTGRFA.

This sequence belongs to the CD-NTase family. D02 subfamily. In terms of assembly, monomer. Crystallizes as a Cap2 homodimer bound on each side by a CdnD monomer. Requires Mg(2+) as cofactor. In terms of processing, in bacteria expressing cap4-dncV-cap2-cap3, this protein is conjugated to a number of other proteins by Cap2, probably via this protein's C-terminal Ala residue. More conjugated DncV is found in the absence of Cap3.

The catalysed reaction is GTP + 2 ATP = 3',3',3'-cAAG + 3 diphosphate. Its activity is regulated as follows. Primed for activation by Cap2 which conjugates it to cellular proteins; activation is target protein-specific (green fluorescent protein does not activate the enzyme), but which protein(s) activate it is unclear. Cyclic nucleotide synthase (second messenger synthase) of a CBASS antivirus system. CBASS (cyclic oligonucleotide-based antiphage signaling system) provides immunity against bacteriophages. The CD-NTase protein (CdnD, this protein) synthesizes cyclic nucleotides in response to infection; these serve as specific second messenger signals. The signals activate a diverse range of effectors, leading to bacterial cell death and thus abortive phage infection. A type II-C(AAG) CBASS system. Its function is as follows. Cyclic trinucleotide synthase that catalyzes the synthesis of 3',3',3'-cyclic AMP-AMP-GMP (cAAG) as the major product, a second messenger for cell signal transduction. Uses ATP as the first donor nucleotide, followed by GTP. Functionally, protects E.coli against phage T2 infection. When the cdnD-cap2-cap3-cap4 operon is introduced in E.coli there is a more than 10(3) decrease in the efficiency of T2 plaque formation. The operon does not protect against phage T5 and only about 10-fold against T7. Expression of cdnD-cap4 alone protects E.coli against phage T2 infection. The protein is Cyclic AMP-AMP-GMP synthase of Enterobacter hormaechei subsp. hoffmannii (strain UCI 50).